The chain runs to 393 residues: Probable acetyl-CoA acetyltransferase (393 aa).

Cys88 (acyl-thioester intermediate) is an active-site residue. Active-site proton acceptor residues include His348 and Cys378.

The protein belongs to the thiolase-like superfamily. Thiolase family.

It localises to the cytoplasm. It carries out the reaction 2 acetyl-CoA = acetoacetyl-CoA + CoA. The sequence is that of Probable acetyl-CoA acetyltransferase (yqeF) from Escherichia coli (strain K12).